Consider the following 738-residue polypeptide: NAD(P)H-quinone oxidoreductase subunit 5, chloroplastic (738 aa).

Transmembrane regions (helical) follow at residues 9-29 (WIIP…LLLF), 40-60 (WAFP…NLSI), 89-109 (IDPL…MVLI), 125-145 (FASM…SNLI), 147-167 (IYIF…FWFT), 185-205 (GDFG…SFEF), 230-250 (AALL…HVWL), 258-278 (TPIS…FLVA), 280-300 (LLPL…IGII), 327-347 (LGYM…FHLI), 354-374 (ALLF…VGYS), 396-416 (ISFL…CFWS), 425-445 (WLYS…TAFY), 546-566 (LFPL…GIPF), 603-623 (FSVS…KPIY), and 718-738 (YLFF…FPVF).

The protein belongs to the complex I subunit 5 family. NDH is composed of at least 16 different subunits, 5 of which are encoded in the nucleus.

The protein resides in the plastid. The protein localises to the chloroplast thylakoid membrane. The enzyme catalyses a plastoquinone + NADH + (n+1) H(+)(in) = a plastoquinol + NAD(+) + n H(+)(out). It carries out the reaction a plastoquinone + NADPH + (n+1) H(+)(in) = a plastoquinol + NADP(+) + n H(+)(out). NDH shuttles electrons from NAD(P)H:plastoquinone, via FMN and iron-sulfur (Fe-S) centers, to quinones in the photosynthetic chain and possibly in a chloroplast respiratory chain. The immediate electron acceptor for the enzyme in this species is believed to be plastoquinone. Couples the redox reaction to proton translocation, and thus conserves the redox energy in a proton gradient. In Ligustrum vulgare (Common privet), this protein is NAD(P)H-quinone oxidoreductase subunit 5, chloroplastic (ndhF).